The chain runs to 592 residues: Inactive heparanase-2 (592 aa).

Residues 1 to 38 form the signal peptide; that stretch reads MRVLCAFPEAMASSSSRPPSCLALVALFLALLLHLSLS. 2 N-linked (GlcNAc...) asparagine glycosylation sites follow: asparagine 254 and asparagine 392.

This sequence belongs to the glycosyl hydrolase 79 family. As to quaternary structure, interacts with HPSE. Interacts with SDC1 (via glycan chains).

It is found in the secreted. It localises to the extracellular space. The protein resides in the extracellular matrix. Binds heparin and heparan sulfate with high affinity, but lacks heparanase activity. Inhibits HPSE, possibly by competing for its substrates (in vitro). The protein is Inactive heparanase-2 (Hpse2) of Mus musculus (Mouse).